Here is a 390-residue protein sequence, read N- to C-terminus: Transforming growth factor beta-1 proprotein (390 aa).

An N-terminal signal peptide occupies residues 1–29 (MPPSGLRLLPLLLPLPWLLVLTPGRPAAG). A straightjacket domain region spans residues 30 to 74 (LSTCKTIDMELVKRKRIEAIRGQILSKLRLASPPSQGEVPPGPLP). The tract at residues 75-271 (EAVLALYNST…ATPLERAQHL (197 aa)) is arm domain. Asn82, Asn136, and Asn176 each carry an N-linked (GlcNAc...) asparagine glycan. A bowtie tail region spans residues 226–252 (DSKDNVLHVEINGISPKRRGDLGTIHD). A Cell attachment site motif is present at residues 244–246 (RGD). Disulfide bonds link Cys285/Cys294, Cys293/Cys356, Cys322/Cys387, and Cys326/Cys389.

It belongs to the TGF-beta family. In terms of assembly, homodimer; disulfide-linked. Interacts with the serine proteases, HTRA1 and HTRA3: the interaction with either inhibits TGFB1-mediated signaling and the HTRA protease activity is required for this inhibition. May interact with THSD4; this interaction may lead to sequestration by FBN1 microfibril assembly and attenuation of TGFB signaling. Interacts with CD109, DPT and ASPN. Interacts with EFEMP2. Interacts with TSKU; the interaction contributes to regulation of the hair cycle. Interacts with TGFBR3. As to quaternary structure, homodimer; disulfide-linked. Interacts with transforming growth factor beta-1 (TGF-beta-1) chain; interaction is non-covalent and maintains TGF-beta-1 in a latent state; each latency-associated peptide (LAP) monomer interacts with TGF-beta-1 in the other monomer. Interacts with LTBP1; leading to regulation of TGF-beta-1 activation. Interacts with LRRC32/GARP; leading to regulation of TGF-beta-1 activation on the surface of activated regulatory T-cells (Tregs). Interacts with LRRC33/NRROS; leading to regulation of TGF-beta-1 activation in macrophages and microglia. Interacts (via cell attachment site) with integrins ITGAV and ITGB6 (ITGAV:ITGB6), leading to release of the active TGF-beta-1. Interacts with NREP; the interaction results in a decrease in TGFB1 autoinduction. Interacts with HSP90AB1; inhibits latent TGFB1 activation. Homodimer; disulfide-linked. Interacts with TGF-beta receptors (TGFBR1 and TGFBR2), leading to signal transduction. Transforming growth factor beta-1 proprotein: The precursor proprotein is cleaved in the Golgi apparatus by FURIN to form Transforming growth factor beta-1 (TGF-beta-1) and Latency-associated peptide (LAP) chains, which remain non-covalently linked, rendering TGF-beta-1 inactive. Post-translationally, N-glycosylated. Deglycosylation leads to activation of Transforming growth factor beta-1 (TGF-beta-1); mechanisms triggering deglycosylation-driven activation of TGF-beta-1 are however unclear. In terms of tissue distribution, abundant in the bone matrix. Expressed in cardiomyocytes.

The protein localises to the secreted. It localises to the extracellular space. Its subcellular location is the extracellular matrix. Its function is as follows. Transforming growth factor beta-1 proprotein: Precursor of the Latency-associated peptide (LAP) and Transforming growth factor beta-1 (TGF-beta-1) chains, which constitute the regulatory and active subunit of TGF-beta-1, respectively. Functionally, required to maintain the Transforming growth factor beta-1 (TGF-beta-1) chain in a latent state during storage in extracellular matrix. Associates non-covalently with TGF-beta-1 and regulates its activation via interaction with 'milieu molecules', such as LTBP1, LRRC32/GARP and LRRC33/NRROS, that control activation of TGF-beta-1. Interaction with LRRC33/NRROS regulates activation of TGF-beta-1 in macrophages and microglia. Interaction with LRRC32/GARP controls activation of TGF-beta-1 on the surface of activated regulatory T-cells (Tregs). Interaction with integrins (ITGAV:ITGB6 or ITGAV:ITGB8) results in distortion of the Latency-associated peptide chain and subsequent release of the active TGF-beta-1. In terms of biological role, multifunctional protein that regulates the growth and differentiation of various cell types and is involved in various processes, such as normal development, immune function, microglia function and responses to neurodegeneration. Activation into mature form follows different steps: following cleavage of the proprotein in the Golgi apparatus, Latency-associated peptide (LAP) and Transforming growth factor beta-1 (TGF-beta-1) chains remain non-covalently linked rendering TGF-beta-1 inactive during storage in extracellular matrix. At the same time, LAP chain interacts with 'milieu molecules', such as LTBP1, LRRC32/GARP and LRRC33/NRROS that control activation of TGF-beta-1 and maintain it in a latent state during storage in extracellular milieus. TGF-beta-1 is released from LAP by integrins (ITGAV:ITGB6 or ITGAV:ITGB8): integrin-binding to LAP stabilizes an alternative conformation of the LAP bowtie tail and results in distortion of the LAP chain and subsequent release of the active TGF-beta-1. Once activated following release of LAP, TGF-beta-1 acts by binding to TGF-beta receptors (TGFBR1 and TGFBR2), which transduce signal. While expressed by many cells types, TGF-beta-1 only has a very localized range of action within cell environment thanks to fine regulation of its activation by Latency-associated peptide chain (LAP) and 'milieu molecules'. Plays an important role in bone remodeling: acts as a potent stimulator of osteoblastic bone formation, causing chemotaxis, proliferation and differentiation in committed osteoblasts. Can promote either T-helper 17 cells (Th17) or regulatory T-cells (Treg) lineage differentiation in a concentration-dependent manner. At high concentrations, leads to FOXP3-mediated suppression of RORC and down-regulation of IL-17 expression, favoring Treg cell development. At low concentrations in concert with IL-6 and IL-21, leads to expression of the IL-17 and IL-23 receptors, favoring differentiation to Th17 cells. Stimulates sustained production of collagen through the activation of CREB3L1 by regulated intramembrane proteolysis (RIP). Mediates SMAD2/3 activation by inducing its phosphorylation and subsequent translocation to the nucleus. Positively regulates odontoblastic differentiation in dental papilla cells, via promotion of IPO7-mediated translocation of phosphorylated SMAD2 to the nucleus and subsequent transcription of target genes. Can induce epithelial-to-mesenchymal transition (EMT) and cell migration in various cell types. This chain is Transforming growth factor beta-1 proprotein (Tgfb1), found in Rattus norvegicus (Rat).